The chain runs to 249 residues: NH(3)-dependent NAD(+) synthetase (249 aa).

29–36 contacts ATP; the sequence is GVSGGVDS. Asp35 is a Mg(2+) binding site. Arg116 is a deamido-NAD(+) binding site. Thr136 provides a ligand contact to ATP. Glu141 lines the Mg(2+) pocket. Deamido-NAD(+) contacts are provided by Lys149 and Asp156. ATP-binding residues include Lys165 and Ser187. 233-234 serves as a coordination point for deamido-NAD(+); sequence HK.

This sequence belongs to the NAD synthetase family. As to quaternary structure, homodimer.

It catalyses the reaction deamido-NAD(+) + NH4(+) + ATP = AMP + diphosphate + NAD(+) + H(+). It participates in cofactor biosynthesis; NAD(+) biosynthesis; NAD(+) from deamido-NAD(+) (ammonia route): step 1/1. Catalyzes the ATP-dependent amidation of deamido-NAD to form NAD. Uses ammonia as a nitrogen source. The sequence is that of NH(3)-dependent NAD(+) synthetase from Syntrophomonas wolfei subsp. wolfei (strain DSM 2245B / Goettingen).